A 605-amino-acid polypeptide reads, in one-letter code: MPRMTNTPIKNIRNFAIVAHIDHGKSTLADRLIQMTGSLEEREMKEQVLDSMDIERERGITIKANTVRLEYDARDGEHYVLNLIDTPGHVDFAYEVSRSLAACESSLLVVDASQGVEAQTLANVYQAIDNNHEIVPVLNKVDLPAAEPERVKAQIEDVIGLDASDAIPISAKTGVGVDEVLEAIVMRLPPPHEGDASAPLKALLVDSWYDAYLGVIVLVRIIDGVLKKGQTVRMMGTGARYPVDRVGVMTPKMVMVESLGPGEIGFITASIKEVADTRVGDTITEDKRATAAALPGFKPAQPVVFCGLFPVDAADFEDLRAAVGKLRLNDASFSYEMETSAALGFGFRCGFLGLLHLEIIQERLTREFDLDLIATAPSVVYRMNLTDGKTVELHNPADMPDPVKIAEIEEPWIRATILTPDEHLGGILKLCQDRRGVQADLSYAGSRAMLVYDLPLNEVVFDFYDRLKSISRGYASFDYHLTDYREGDLVKMSILVNDEPVDALSMLVHRSQAERRGRAMCEKLKELIPQHMFKIPIQAAIGGRIIARETISALRKDVTAKCYGGDVTRKRKLLEKQKEGKKKMRQFGKVEIPQEAFIQALKMGD.

The tr-type G domain occupies 10-192; the sequence is KNIRNFAIVA…AIVMRLPPPH (183 aa). GTP is bound by residues 22-27 and 139-142; these read DHGKST and NKVD.

The protein belongs to the TRAFAC class translation factor GTPase superfamily. Classic translation factor GTPase family. LepA subfamily.

It is found in the cell inner membrane. It carries out the reaction GTP + H2O = GDP + phosphate + H(+). Required for accurate and efficient protein synthesis under certain stress conditions. May act as a fidelity factor of the translation reaction, by catalyzing a one-codon backward translocation of tRNAs on improperly translocated ribosomes. Back-translocation proceeds from a post-translocation (POST) complex to a pre-translocation (PRE) complex, thus giving elongation factor G a second chance to translocate the tRNAs correctly. Binds to ribosomes in a GTP-dependent manner. This chain is Elongation factor 4, found in Chelativorans sp. (strain BNC1).